The primary structure comprises 168 residues: G/U mismatch-specific DNA glycosylase (168 aa).

This sequence belongs to the uracil-DNA glycosylase (UDG) superfamily. TDG/mug family. Binds DNA as a monomer.

The protein resides in the cytoplasm. It catalyses the reaction Specifically hydrolyzes mismatched double-stranded DNA and polynucleotides, releasing free uracil.. Functionally, excises ethenocytosine and uracil, which can arise by alkylation or deamination of cytosine, respectively, from the corresponding mispairs with guanine in ds-DNA. It is capable of hydrolyzing the carbon-nitrogen bond between the sugar-phosphate backbone of the DNA and the mispaired base. The complementary strand guanine functions in substrate recognition. Required for DNA damage lesion repair in stationary-phase cells. This is G/U mismatch-specific DNA glycosylase from Escherichia coli (strain SMS-3-5 / SECEC).